Reading from the N-terminus, the 237-residue chain is Ribosomal RNA small subunit methyltransferase G (237 aa).

S-adenosyl-L-methionine contacts are provided by residues G78, F83, 129–130, and R148; that span reads AE. A disordered region spans residues 216 to 237; it reads SKKKETPNKYPRKAGTPNKKPL.

The protein belongs to the methyltransferase superfamily. RNA methyltransferase RsmG family.

The protein resides in the cytoplasm. Its function is as follows. Specifically methylates the N7 position of a guanine in 16S rRNA. The protein is Ribosomal RNA small subunit methyltransferase G of Streptococcus agalactiae serotype III (strain NEM316).